A 270-amino-acid polypeptide reads, in one-letter code: Methylthioribulose-1-phosphate dehydratase (270 aa).

Position 122 (Cys-122) interacts with substrate. Residues His-140 and His-142 each coordinate Zn(2+). Glu-165 functions as the Proton donor/acceptor in the catalytic mechanism. Zn(2+) is bound at residue His-230.

It belongs to the aldolase class II family. MtnB subfamily. The cofactor is Zn(2+).

The protein resides in the cytoplasm. The catalysed reaction is 5-(methylsulfanyl)-D-ribulose 1-phosphate = 5-methylsulfanyl-2,3-dioxopentyl phosphate + H2O. The protein operates within amino-acid biosynthesis; L-methionine biosynthesis via salvage pathway; L-methionine from S-methyl-5-thio-alpha-D-ribose 1-phosphate: step 2/6. Its function is as follows. Catalyzes the dehydration of methylthioribulose-1-phosphate (MTRu-1-P) into 2,3-diketo-5-methylthiopentyl-1-phosphate (DK-MTP-1-P). This Candida albicans (strain WO-1) (Yeast) protein is Methylthioribulose-1-phosphate dehydratase.